A 74-amino-acid polypeptide reads, in one-letter code: Acyl carrier protein (74 aa).

Residues 1-73 form the Carrier domain; it reads MAVFEKVQEI…DLVAYVEEKS (73 aa). Ser35 is subject to O-(pantetheine 4'-phosphoryl)serine.

Belongs to the acyl carrier protein (ACP) family. Post-translationally, 4'-phosphopantetheine is transferred from CoA to a specific serine of apo-ACP by AcpS. This modification is essential for activity because fatty acids are bound in thioester linkage to the sulfhydryl of the prosthetic group.

The protein resides in the cytoplasm. It functions in the pathway lipid metabolism; fatty acid biosynthesis. Carrier of the growing fatty acid chain in fatty acid biosynthesis. The chain is Acyl carrier protein from Streptococcus pyogenes serotype M1.